A 153-amino-acid polypeptide reads, in one-letter code: Transcriptional repressor NrdR (153 aa).

Residues 3–34 fold into a zinc finger; the sequence is CPFCNNISTNVKDSRSIEDDMLIRRRRVCPVC. In terms of domain architecture, ATP-cone spans 49–139; sequence LMVIKKNGGL…VYMNFKNIND (91 aa).

Belongs to the NrdR family. Zn(2+) serves as cofactor.

Negatively regulates transcription of bacterial ribonucleotide reductase nrd genes and operons by binding to NrdR-boxes. The protein is Transcriptional repressor NrdR of Ehrlichia ruminantium (strain Gardel).